The chain runs to 475 residues: Doublecortin domain-containing protein 2 (475 aa).

2 Doublecortin domains span residues 17–100 and 139–221; these read KSVL…LNYL and CTIF…LPYS. The interval 234–475 is disordered; sequence YGQKASSLPP…ESNKASSAVA (242 aa). Polar residues predominate over residues 252–272; the sequence is GSGNYRQSKSTIGSSDNSSPQ. Serine 270 carries the phosphoserine modification. Residues 353–365 are compositionally biased toward basic and acidic residues; the sequence is EKTSKDANQKDDF. Residues 407–419 are compositionally biased toward acidic residues; that stretch reads TDEENGEELDQVT. Residues 455–475 show a composition bias toward polar residues; that stretch reads TVTSPQENEGNESNKASSAVA.

As to quaternary structure, interacts with DVL1, DVL2 and DVL3. Expressed in hair cells of the inner ear.

The protein resides in the cell projection. It localises to the cilium. It is found in the cytoplasm. The protein localises to the cytoskeleton. Its subcellular location is the cilium axoneme. The protein resides in the kinocilium. Its function is as follows. Protein that plays a role in the inhibition of canonical Wnt signaling pathway. May be involved in neuronal migration during development of the cerebral neocortex. Involved in the control of ciliogenesis and ciliary length. The protein is Doublecortin domain-containing protein 2 (Dcdc2) of Rattus norvegicus (Rat).